The chain runs to 102 residues: uncharacterized protein (102 aa).

This is an uncharacterized protein from Saccharomyces cerevisiae (strain ATCC 204508 / S288c) (Baker's yeast).